The chain runs to 251 residues: RING-H2 finger protein ATL10 (251 aa).

Residues 59–79 traverse the membrane as a helical segment; it reads MMLLSILICGIICCLGLHYII. The RING-type; atypical zinc finger occupies 135-177; that stretch reads CVICLSDFVSGEQLRLLPKCNHGFHVRCIDKWLQQHLTCPKCR.

Belongs to the RING-type zinc finger family. ATL subfamily.

It is found in the membrane. It carries out the reaction S-ubiquitinyl-[E2 ubiquitin-conjugating enzyme]-L-cysteine + [acceptor protein]-L-lysine = [E2 ubiquitin-conjugating enzyme]-L-cysteine + N(6)-ubiquitinyl-[acceptor protein]-L-lysine.. Its pathway is protein modification; protein ubiquitination. This Arabidopsis thaliana (Mouse-ear cress) protein is RING-H2 finger protein ATL10 (ATL10).